A 250-amino-acid chain; its full sequence is 2,3-bisphosphoglycerate-dependent phosphoglycerate mutase (250 aa).

Substrate-binding positions include arginine 10 to asparagine 17, threonine 23 to glycine 24, arginine 62, glutamate 89 to tyrosine 92, lysine 100, arginine 116 to arginine 117, and glycine 185 to asparagine 186. The Tele-phosphohistidine intermediate role is filled by histidine 11. Glutamate 89 functions as the Proton donor/acceptor in the catalytic mechanism.

This sequence belongs to the phosphoglycerate mutase family. BPG-dependent PGAM subfamily. As to quaternary structure, homodimer.

It catalyses the reaction (2R)-2-phosphoglycerate = (2R)-3-phosphoglycerate. It participates in carbohydrate degradation; glycolysis; pyruvate from D-glyceraldehyde 3-phosphate: step 3/5. Its function is as follows. Catalyzes the interconversion of 2-phosphoglycerate and 3-phosphoglycerate. This chain is 2,3-bisphosphoglycerate-dependent phosphoglycerate mutase, found in Salmonella agona (strain SL483).